Reading from the N-terminus, the 240-residue chain is 1-(5-phosphoribosyl)-5-[(5-phosphoribosylamino)methylideneamino] imidazole-4-carboxamide isomerase 1 (240 aa).

The active-site Proton acceptor is the Asp8. Catalysis depends on Asp129, which acts as the Proton donor.

It belongs to the HisA/HisF family.

The protein localises to the cytoplasm. The catalysed reaction is 1-(5-phospho-beta-D-ribosyl)-5-[(5-phospho-beta-D-ribosylamino)methylideneamino]imidazole-4-carboxamide = 5-[(5-phospho-1-deoxy-D-ribulos-1-ylimino)methylamino]-1-(5-phospho-beta-D-ribosyl)imidazole-4-carboxamide. It functions in the pathway amino-acid biosynthesis; L-histidine biosynthesis; L-histidine from 5-phospho-alpha-D-ribose 1-diphosphate: step 4/9. This is 1-(5-phosphoribosyl)-5-[(5-phosphoribosylamino)methylideneamino] imidazole-4-carboxamide isomerase 1 from Ruegeria pomeroyi (strain ATCC 700808 / DSM 15171 / DSS-3) (Silicibacter pomeroyi).